Here is a 211-residue protein sequence, read N- to C-terminus: Mitotic spindle assembly checkpoint protein MAD2B (211 aa).

One can recognise an HORMA domain in the interval glutamine 13–valine 203.

As to quaternary structure, homooligomer. Interacts with rev1. Interacts with rev3l. Interacts with fzr1 (in complex with the anaphase promoting complex APC). May interact with cdc20.

It localises to the nucleus. The protein localises to the cytoplasm. The protein resides in the cytoskeleton. It is found in the spindle. In terms of biological role, adapter protein able to interact with different proteins and involved in different biological processes. Mediates the interaction between the error-prone DNA polymerase zeta catalytic subunit rev3l and the inserter polymerase rev1, thereby mediating the second polymerase switching in translesion DNA synthesis. Translesion DNA synthesis releases the replication blockade of replicative polymerases, stalled in presence of DNA lesions. May also play a role in signal transduction in response to DNA damage. May regulate the activation of the anaphase promoting complex APC thereby regulating progression through the cell cycle. Through transcriptional regulation may play a role in epithelial-mesenchymal transdifferentiation. This chain is Mitotic spindle assembly checkpoint protein MAD2B (mad2l2), found in Danio rerio (Zebrafish).